A 255-amino-acid polypeptide reads, in one-letter code: 3-dehydroquinate dehydratase (255 aa).

Residues 47 to 49 and R83 each bind 3-dehydroquinate; that span reads EWR. H145 functions as the Proton donor/acceptor in the catalytic mechanism. K172 functions as the Schiff-base intermediate with substrate in the catalytic mechanism. Positions 215, 234, and 238 each coordinate 3-dehydroquinate.

It belongs to the type-I 3-dehydroquinase family. Homodimer.

The enzyme catalyses 3-dehydroquinate = 3-dehydroshikimate + H2O. Its pathway is metabolic intermediate biosynthesis; chorismate biosynthesis; chorismate from D-erythrose 4-phosphate and phosphoenolpyruvate: step 3/7. In terms of biological role, involved in the third step of the chorismate pathway, which leads to the biosynthesis of aromatic amino acids. Catalyzes the cis-dehydration of 3-dehydroquinate (DHQ) and introduces the first double bond of the aromatic ring to yield 3-dehydroshikimate. This Clostridium kluyveri (strain NBRC 12016) protein is 3-dehydroquinate dehydratase.